The following is a 142-amino-acid chain: Transcriptional regulator MraZ (142 aa).

SpoVT-AbrB domains follow at residues 5-47 (EYPY…PLPG) and 76-119 (ASKA…NPQR).

The protein belongs to the MraZ family. In terms of assembly, forms oligomers.

The protein resides in the cytoplasm. It localises to the nucleoid. The protein is Transcriptional regulator MraZ of Deinococcus radiodurans (strain ATCC 13939 / DSM 20539 / JCM 16871 / CCUG 27074 / LMG 4051 / NBRC 15346 / NCIMB 9279 / VKM B-1422 / R1).